Here is a 336-residue protein sequence, read N- to C-terminus: Ephrin-B2 (336 aa).

Residues 1–28 (MAMARSRRDSVWKYCWGLLMVLCRTAIS) form the signal peptide. At 29–232 (RSIVLEPIYW…LLGSEVALFA (204 aa)) the chain is on the extracellular side. The 137-residue stretch at 31–167 (IVLEPIYWNS…TRAMKILMKV (137 aa)) folds into the Ephrin RBD domain. Asn-39 is a glycosylation site (N-linked (GlcNAc...) asparagine). Intrachain disulfides connect Cys-65–Cys-104 and Cys-92–Cys-156. An N-linked (GlcNAc...) asparagine glycan is attached at Asn-142. The interval 170 to 216 (DASSAGSARNHGPTRRPELEAGTNGRSSTTSPFVKPNPGSSTDGNSA) is disordered. The segment covering 193–216 (NGRSSTTSPFVKPNPGSSTDGNSA) has biased composition (polar residues). Residues 233–253 (GIASGCIIFIVIIITLVVLLL) traverse the membrane as a helical segment. The Cytoplasmic segment spans residues 254–336 (KYRRRHRKHS…QSPANIYYKV (83 aa)). Phosphoserine is present on Ser-263. Phosphothreonine is present on Thr-277. Arg-280 is subject to Omega-N-methylarginine. A PDZ-binding motif is present at residues 334-336 (YKV).

It belongs to the ephrin family. Interacts with PDZRN3. Binds to the ephrin receptor EPHA3, EPHA4 and EPHB4. In terms of processing, inducible phosphorylation of tyrosine residues in the cytoplasmic domain. Expressed in inner and outer pillar cells of the organ of Corti (at protein level). Expressed on lateral floor plate cells, specifically on commissural axon segments that have passed through the floor plate. Expressed in cells of the retinal ganglion cell layer during retinal axon guidance to the optic disk. Expressed in myogenic progenitor cells.

It localises to the cell membrane. The protein resides in the cell junction. Its subcellular location is the adherens junction. In terms of biological role, cell surface transmembrane ligand for Eph receptors, a family of receptor tyrosine kinases which are crucial for migration, repulsion and adhesion during neuronal, vascular and epithelial development. Binds promiscuously Eph receptors residing on adjacent cells, leading to contact-dependent bidirectional signaling into neighboring cells. The signaling pathway downstream of the receptor is referred to as forward signaling while the signaling pathway downstream of the ephrin ligand is referred to as reverse signaling. Binds to receptor tyrosine kinase including EPHA4, EPHA3 and EPHB4. Together with EPHB4 plays a central role in heart morphogenesis and angiogenesis through regulation of cell adhesion and cell migration. EPHB4-mediated forward signaling controls cellular repulsion and segregation from EFNB2-expressing cells. May play a role in constraining the orientation of longitudinally projecting axons. The chain is Ephrin-B2 (Efnb2) from Mus musculus (Mouse).